Here is a 162-residue protein sequence, read N- to C-terminus: uncharacterized protein (162 aa).

The N-terminal stretch at 1–24 (MKRGVATLPVILVILLSVAAGAGA) is a signal peptide.

This is an uncharacterized protein from Mycobacterium bovis (strain ATCC BAA-935 / AF2122/97).